A 372-amino-acid polypeptide reads, in one-letter code: Ephrin type-A receptor 8 (372 aa).

Positions 2–263 (IHIEKIIGSG…HVVSVLEALV (262 aa)) constitute a Protein kinase domain. ATP is bound by residues 8–16 (IGSGESGEV) and Lys-34. Asp-127 serves as the catalytic Proton acceptor. Tyr-206 bears the Phosphotyrosine; by autocatalysis mark. The 76-residue stretch at 297–372 (NGDLTVGDWL…SCTQGPRRHL (76 aa)) folds into the SAM domain. A PDZ-binding motif is present at residues 370–372 (RHL).

Heterotetramer upon binding of the ligand. The heterotetramer is composed of an ephrin dimer and a receptor dimer. Oligomerization is probably required to induce biological responses. May also form heterodimers with other ephrin receptors. Interacts with FYN; possible downstream effector of EPHA8 in regulation of cell adhesion. Interacts with PIK3CG; regulates integrin-mediated cell adhesion to substrate. Interacts with TIAM1; regulates clathrin-mediated endocytosis of EPHA8. Interacts with ANKS1A and ANKS1B; EPHA8 kinase activity-independent but stimulated by EPHA8 ubiquitination. Post-translationally, phosphorylated. Phosphorylation is stimulated upon binding of its ligands including EFNA2, EFNA3 and EFNA5. Autophosphorylation on Tyr-206 modulates tyrosine kinase activity. Ubiquitinated. Ubiquitination by CBL regulates the receptor stability and activity through proteasomal degradation. ANKS1A prevents ubiquitination and degradation. In terms of tissue distribution, most abundant in brain.

It localises to the cell membrane. The protein resides in the cell projection. It is found in the early endosome membrane. The catalysed reaction is L-tyrosyl-[protein] + ATP = O-phospho-L-tyrosyl-[protein] + ADP + H(+). In terms of biological role, receptor tyrosine kinase which binds promiscuously GPI-anchored ephrin-A family ligands residing on adjacent cells, leading to contact-dependent bidirectional signaling into neighboring cells. The signaling pathway downstream of the receptor is referred to as forward signaling while the signaling pathway downstream of the ephrin ligand is referred to as reverse signaling. The GPI-anchored ephrin-A EFNA2, EFNA3, and EFNA5 are able to activate EPHA8 through phosphorylation. With EFNA5 may regulate integrin-mediated cell adhesion and migration on fibronectin substrate but also neurite outgrowth. During development of the nervous system also plays a role in axon guidance. Downstream effectors of the EPHA8 signaling pathway include FYN which promotes cell adhesion upon activation by EPHA8 and the MAP kinases in the stimulation of neurite outgrowth. This chain is Ephrin type-A receptor 8 (Epha8), found in Rattus norvegicus (Rat).